Reading from the N-terminus, the 379-residue chain is RNA-splicing ligase RtcB2 (379 aa).

The Mn(2+) site is built by aspartate 74, cysteine 77, histidine 137, histidine 168, and histidine 239. 136–140 is a GMP binding site; sequence NHFVE. GMP is bound by residues 239-240, serine 277, 294-297, and lysine 372; these read HN and HGAG. Histidine 294 serves as the catalytic GMP-histidine intermediate.

The protein belongs to the RtcB family. RtcB2 subfamily. Mn(2+) serves as cofactor.

It carries out the reaction a 3'-end 3'-phospho-ribonucleotide-RNA + a 5'-end dephospho-ribonucleoside-RNA + GTP = a ribonucleotidyl-ribonucleotide-RNA + GMP + diphosphate. In terms of biological role, GTP-dependent RNA ligase involved in rRNA repair. Repairs damaged 16S rRNA in 30S subunits that has been cleaved between adenine-1493 and guanosine-1494 (E.coli nubering). This specific cleavage is inflicted by CdiA (ECL_04451) or by colicin E3-type (ColE3) proteins. Poorly repairs damaged rRNA in the 70S ribosome; addition of release factor PrfH improves repair about 3-fold in vitro, probably because PrfH hydrolyzes the nascent chain allowing ribosomal subunit dissociation. In vivo the PrfH-RtcB2 pair restores growth in the presence of ribotoxins that specifically create this damage. Does not repair damaged tRNA (tested with tRNA(Asp) and tRNA(Arg)). The sequence is that of RNA-splicing ligase RtcB2 from Escherichia coli (strain ATCC 25922 / DSM 1103 / LMG 8223 / NCIMB 12210 / NCTC 12241 / WDCM 00013 / Seattle 1946).